A 634-amino-acid chain; its full sequence is Putative peptidoglycan O-acetyltransferase YrhL (634 aa).

Transmembrane regions (helical) follow at residues 10-30 (YIPG…TYHL), 38-58 (GFIG…SILL), 79-99 (RLLP…VLFD), 110-130 (AISS…LSYF), 145-165 (LAIE…GMYI), 172-192 (LAAV…VLYE), 244-264 (FLAF…EPFL), 270-290 (LFIS…SSFL), 307-327 (YGIY…QEIG), 329-349 (PVFW…ELSY), and 385-405 (MSIG…SGLA). Residues 413 to 481 (KWTYSSQETN…SQQLKKPADT (69 aa)) are disordered. Positions 414 to 429 (WTYSSQETNADTSQAS) are enriched in polar residues. Composition is skewed to basic and acidic residues over residues 430–447 (GDKK…EQKT) and 455–470 (KENK…KKDT).

Belongs to the acyltransferase 3 family.

The protein resides in the cell membrane. The chain is Putative peptidoglycan O-acetyltransferase YrhL (yrhL) from Bacillus subtilis (strain 168).